A 222-amino-acid polypeptide reads, in one-letter code: Beta-casein (222 aa).

Residues 1–15 form the signal peptide; that stretch reads MKVLILACLVALALA. Residue Thr-27 is modified to Phosphothreonine. Phosphoserine occurs at positions 30, 32, 33, and 34.

This sequence belongs to the beta-casein family. Mammary gland specific. Secreted in milk.

The protein resides in the secreted. Functionally, important role in determination of the surface properties of the casein micelles. In Ovis aries (Sheep), this protein is Beta-casein (CSN2).